We begin with the raw amino-acid sequence, 248 residues long: MAATLGRDQYVYMAKLAEQAERYEEMVQFMEQLVTGATPAEELTVEERNLLSVAYKNVIGSLRAAWRIVSSIEQKEESRKNDEHVSLVKDYRSKVESELSSVCSGILKLLDSHLIPSAGASESKVFYLKMKGDYHRYMAEFKSGDERKTAAEDTMLAYKAAQDIAAADMAPTHPIRLGLALNFSVFYYEILNSSDKACNMAKQAFEEAIAELDTLGEESYKDSTLIMQLLRDNLTLWTSDMQEQMDEA.

A phosphoserine; by CRPK1 mark is found at serine 70, serine 112, and serine 193. Threonine 214 is subject to Phosphothreonine; by CRPK1.

It belongs to the 14-3-3 family. As to quaternary structure, interacts with SERK1 in the cell membrane. Component of the SERK1 signaling complex, composed of KAPP, CDC48A, GRF6 or GRF7, SERK1, SERK2, SERK3/BAK1 and BRI1. Interacts with TPK1. Interacts with ADF1. Binds to CRPK1 at the plasma membrane. Interacts with DREB1A and DREB1B in the nucleus when activated by CRPK1-mediated phosphorylation upon freezing. Interacts with CINV1. Binds to the N-terminal region of B1L. In terms of processing, transphosphorylated by SERK1. Post-translationally, phosphorylated by CRPK1 in response to cold.

The protein localises to the nucleus. Its subcellular location is the cell membrane. It localises to the cytoplasm. Its function is as follows. Is associated with a DNA binding complex that binds to the G box, a well-characterized cis-acting DNA regulatory element found in plant genes. Specific negative regulator of slow-vacuolar (SV) ion channel. Mediates F-actin dynamics possibly through inhibiting ADF1 phosphorylation. Negative regulator of freezing tolerance that modulates cold-responsive C-repeat-binding factors (CBF) DREB1A and DREB1B proteins stability by facilitating their ubiquitin-mediated degradation when activated by CRPK1-mediated phosphorylation in freezing conditions; this processus is counteracted by B1L. The polypeptide is 14-3-3-like protein G-BOX factor 14 lambda (Arabidopsis thaliana (Mouse-ear cress)).